The following is a 214-amino-acid chain: Small ribosomal subunit protein uS5 (214 aa).

Residues 54 to 117 (LKYEVVDIKV…RDAKMNIIPV (64 aa)) form the S5 DRBM domain.

This sequence belongs to the universal ribosomal protein uS5 family. In terms of assembly, part of the 30S ribosomal subunit. Contacts protein S4.

In terms of biological role, with S4 and S12 plays an important role in translational accuracy. The chain is Small ribosomal subunit protein uS5 from Saccharolobus solfataricus (strain ATCC 35092 / DSM 1617 / JCM 11322 / P2) (Sulfolobus solfataricus).